The sequence spans 478 residues: Aspartyl/glutamyl-tRNA(Asn/Gln) amidotransferase subunit B 2 (478 aa).

It belongs to the GatB/GatE family. GatB subfamily. In terms of assembly, heterotrimer of A, B and C subunits.

The enzyme catalyses L-glutamyl-tRNA(Gln) + L-glutamine + ATP + H2O = L-glutaminyl-tRNA(Gln) + L-glutamate + ADP + phosphate + H(+). The catalysed reaction is L-aspartyl-tRNA(Asn) + L-glutamine + ATP + H2O = L-asparaginyl-tRNA(Asn) + L-glutamate + ADP + phosphate + 2 H(+). In terms of biological role, allows the formation of correctly charged Asn-tRNA(Asn) or Gln-tRNA(Gln) through the transamidation of misacylated Asp-tRNA(Asn) or Glu-tRNA(Gln) in organisms which lack either or both of asparaginyl-tRNA or glutaminyl-tRNA synthetases. The reaction takes place in the presence of glutamine and ATP through an activated phospho-Asp-tRNA(Asn) or phospho-Glu-tRNA(Gln). The sequence is that of Aspartyl/glutamyl-tRNA(Asn/Gln) amidotransferase subunit B 2 (gatB2) from Clostridium acetobutylicum (strain ATCC 824 / DSM 792 / JCM 1419 / IAM 19013 / LMG 5710 / NBRC 13948 / NRRL B-527 / VKM B-1787 / 2291 / W).